We begin with the raw amino-acid sequence, 414 residues long: Clusterin-associated protein 1 (414 aa).

A coiled-coil region spans residues 198–291 (KTKDLLNNVA…ERFEEAKNTL (94 aa)). The tract at residues 305 to 414 (LLKSGSNDDS…EPLDESDNDF (110 aa)) is disordered. 2 stretches are compositionally biased toward acidic residues: residues 312 to 328 (DDSD…DSEL) and 360 to 389 (DSDD…EDES). Residues serine 314, serine 324, and serine 326 each carry the phosphoserine modification. Serine 410 bears the Phosphoserine mark.

The protein belongs to the CLUAP1 family. Interacts with CLU/clusterin. Interacts with UBXN10; the interaction is direct.

The protein localises to the cell projection. Its subcellular location is the cilium. It is found in the nucleus. In terms of biological role, required for cilia biogenesis. Appears to function within the multiple intraflagellar transport complex B (IFT-B). Key regulator of hedgehog signaling. The sequence is that of Clusterin-associated protein 1 (CLUAP1) from Macaca fascicularis (Crab-eating macaque).